The primary structure comprises 216 residues: Small ribosomal subunit protein uS3 (216 aa).

The 69-residue stretch at 38–106 (IRGYLKKKLY…EIIINILEVR (69 aa)) folds into the KH type-2 domain.

This sequence belongs to the universal ribosomal protein uS3 family. As to quaternary structure, part of the 30S ribosomal subunit. Forms a tight complex with proteins S10 and S14.

Binds the lower part of the 30S subunit head. Binds mRNA in the 70S ribosome, positioning it for translation. The polypeptide is Small ribosomal subunit protein uS3 (Syntrophus aciditrophicus (strain SB)).